Reading from the N-terminus, the 186-residue chain is Ribosome-recycling factor (186 aa).

It belongs to the RRF family.

The protein resides in the cytoplasm. In terms of biological role, responsible for the release of ribosomes from messenger RNA at the termination of protein biosynthesis. May increase the efficiency of translation by recycling ribosomes from one round of translation to another. This chain is Ribosome-recycling factor, found in Bartonella bacilliformis (strain ATCC 35685 / KC583 / Herrer 020/F12,63).